The primary structure comprises 417 residues: uncharacterized protein (417 aa).

The first 21 residues, 1-21 (MPYYWGAILIGGVFLAGCTQN), serve as a signal peptide directing secretion.

This is an uncharacterized protein from Methanocaldococcus jannaschii (strain ATCC 43067 / DSM 2661 / JAL-1 / JCM 10045 / NBRC 100440) (Methanococcus jannaschii).